We begin with the raw amino-acid sequence, 248 residues long: Large ribosomal subunit protein uL4 (248 aa).

Disordered regions lie at residues 48–95 (GTHK…GPVP) and 210–248 (AFSE…RTGA). The span at 233–248 (DATKARSSRHDDRTGA) shows a compositional bias: basic and acidic residues.

Belongs to the universal ribosomal protein uL4 family. As to quaternary structure, part of the 50S ribosomal subunit.

Its function is as follows. One of the primary rRNA binding proteins, this protein initially binds near the 5'-end of the 23S rRNA. It is important during the early stages of 50S assembly. It makes multiple contacts with different domains of the 23S rRNA in the assembled 50S subunit and ribosome. Functionally, forms part of the polypeptide exit tunnel. The polypeptide is Large ribosomal subunit protein uL4 (Tropheryma whipplei (strain TW08/27) (Whipple's bacillus)).